The following is a 352-amino-acid chain: Protein-glutamate methylesterase/protein-glutamine glutaminase (352 aa).

In terms of domain architecture, Response regulatory spans 5-122 (RAIVIDDSAF…SLDIRNVEDE (118 aa)). 4-aspartylphosphate is present on D56. In terms of domain architecture, CheB-type methylesterase spans 163-352 (RSIVSIGTST…IPSLIVKQLT (190 aa)). Active-site residues include S171, H198, and D294.

It belongs to the CheB family. In terms of processing, phosphorylated by CheA. Phosphorylation of the N-terminal regulatory domain activates the methylesterase activity.

The protein resides in the cytoplasm. The enzyme catalyses [protein]-L-glutamate 5-O-methyl ester + H2O = L-glutamyl-[protein] + methanol + H(+). It catalyses the reaction L-glutaminyl-[protein] + H2O = L-glutamyl-[protein] + NH4(+). In terms of biological role, involved in chemotaxis. Part of a chemotaxis signal transduction system that modulates chemotaxis in response to various stimuli. Catalyzes the demethylation of specific methylglutamate residues introduced into the chemoreceptors (methyl-accepting chemotaxis proteins or MCP) by CheR. Also mediates the irreversible deamidation of specific glutamine residues to glutamic acid. The chain is Protein-glutamate methylesterase/protein-glutamine glutaminase from Oceanobacillus iheyensis (strain DSM 14371 / CIP 107618 / JCM 11309 / KCTC 3954 / HTE831).